Consider the following 149-residue polypeptide: CyanoQ (149 aa).

The N-terminal stretch at 1–21 (MSRLRSLLSLILVLVTTVLVS) is a signal peptide. Residue Cys22 is the site of N-palmitoyl cysteine attachment. Residue Cys22 is the site of S-diacylglycerol cysteine attachment.

This sequence belongs to the PsbQ family. CyanoQ subfamily. In terms of assembly, PSII is composed of 1 copy each of membrane proteins PsbA, PsbB, PsbC, PsbD, PsbE, PsbF, PsbH, PsbI, PsbJ, PsbK, PsbL, PsbM, PsbT, PsbX, PsbY, PsbZ, Psb30/Ycf12, peripheral proteins PsbO, CyanoQ (PsbQ), PsbU, PsbV and a large number of cofactors. It forms dimeric complexes. Pull-down experiments with His-tagged PsbQ pull down dimeric, but not monomeric, PSII. Post-translationally, the N-terminus is blocked. Upon expression in E.coli the N-terminus is modified with a diacylglycerol and an acyl group bound to two palmitates and one palmitoleate.

The protein resides in the cellular thylakoid membrane. Its function is as follows. One of the extrinsic, lumenal subunits of photosystem II (PSII), which stabilize and protect the oxygen-evolving complex. PSII is a light-driven water plastoquinone oxidoreductase, using light energy to abstract electrons from H(2)O, generating a proton gradient subsequently used for ATP formation. Plays a role in the stability of the oxygen-evolving center on the luminal side of PSII. Required for optimal photoautotrophic growth in the absence of Ca(2+) or Cl(-), functions in optimizing PSII water oxidation/O(2) evolving activity. Requires PsbO to bind to PSII. In Synechocystis sp. (strain ATCC 27184 / PCC 6803 / Kazusa), this protein is CyanoQ.